The chain runs to 727 residues: Sodium-dependent neutral amino acid transporter SLC6A17 (727 aa).

Over 1-69 (MPKNSKVTQR…RPAWNSKLQY (69 aa)) the chain is Cytoplasmic. A phosphoserine mark is found at serine 13 and serine 20. The chain crosses the membrane as a helical span at residues 70-90 (ILAQIGFSVGLGNIWRFPYLC). At 91 to 95 (QKNGG) the chain is on the extracellular side. A helical membrane pass occupies residues 96–116 (GAYLVPYLVLLIIIGIPLFFL). Over 117–147 (ELAVGQRIRRGSIGVWHYICPRLGGIGFSSC) the chain is Cytoplasmic. A helical membrane pass occupies residues 148 to 168 (IVCLFVGLYYNVIIGWSIFYF). Over 169 to 222 (FKSFQYPLPWSECPVVRNGSVAVVEAECEKSSATTYFWYREALDISDSISESGG) the chain is Extracellular. Asparagine 186 carries N-linked (GlcNAc...) asparagine glycosylation. The chain crosses the membrane as a helical span at residues 223–243 (LNWKMTLCLLVAWSIVGMAVV). Topologically, residues 244-253 (KGIQSSGKVM) are cytoplasmic. Residues 254–274 (YFSSLFPYVVLACFLVRGLLL) traverse the membrane as a helical segment. Topologically, residues 275 to 300 (RGAVDGILHMFTPKLDKMLDPQVWRE) are extracellular. The helical transmembrane segment at 301–321 (AATQVFFALGLGFGGVIAFSS) threads the bilayer. The Cytoplasmic portion of the chain corresponds to 322 to 334 (YNKQDNNCHFDAA). Residues 335 to 355 (LVSFINFFTSVLATLVVFAVL) traverse the membrane as a helical segment. Residues 356-460 (GFKANIMNEK…HFPASPFWSV (105 aa)) are Extracellular-facing. Tyrosine 377 is subject to Phosphotyrosine. The N-linked (GlcNAc...) asparagine glycan is linked to asparagine 393. Residues 461 to 481 (MFFLMLINLGLGSMIGTMAGI) form a helical membrane-spanning segment. The Cytoplasmic portion of the chain corresponds to 482–490 (TTPIIDTFK). A helical membrane pass occupies residues 491–511 (VPKEMFTVGCCVFAFLVGLLF). Over 512–527 (VQRSGNYFVTMFDDYS) the chain is Extracellular. The helical transmembrane segment at 528-548 (ATLPLTLIVILENIAVAWIYG) threads the bilayer. Residues 549 to 573 (TKKFMQELTEMLGFRPYRFYFYMWK) are Cytoplasmic-facing. The helical transmembrane segment at 574 to 594 (FVSPLCMAVLTTASIIQLGVT) threads the bilayer. Residues 595-617 (PPGYSAWIKEEAAERYLYFPNWA) are Extracellular-facing. The chain crosses the membrane as a helical span at residues 618–638 (MALLITLIVVATLPIPVVFVL). Residues 639–727 (RHFHLLSDGS…LLASTPESEL (89 aa)) are Cytoplasmic-facing. Serine 665 and serine 701 each carry phosphoserine. The segment at 680–727 (VPSEAPSPMPTHRSYLGPGSTSPLETSGNPNGRYGSGYLLASTPESEL) is disordered. A compositionally biased stretch (polar residues) spans 698-709 (GSTSPLETSGNP).

Belongs to the sodium:neurotransmitter symporter (SNF) (TC 2.A.22) family.

The protein resides in the cytoplasmic vesicle. The protein localises to the secretory vesicle. Its subcellular location is the synaptic vesicle membrane. It localises to the postsynapse. It is found in the presynapse. The catalysed reaction is L-proline(in) + Na(+)(in) = L-proline(out) + Na(+)(out). The enzyme catalyses L-leucine(in) + Na(+)(in) = L-leucine(out) + Na(+)(out). It carries out the reaction glycine(in) + Na(+)(in) = glycine(out) + Na(+)(out). It catalyses the reaction L-alanine(in) + Na(+)(in) = L-alanine(out) + Na(+)(out). The catalysed reaction is L-glutamine(in) + Na(+)(in) = L-glutamine(out) + Na(+)(out). In terms of biological role, synaptic vesicle transporter with apparent selectivity for neutral amino acids. The transport is sodium-coupled but chloride-independent, likely driven by the proton electrochemical gradient generated by vacuolar H(+)-ATPase in an overall electrogenic mechanism. May contribute to the synaptic uptake of neurotransmitter precursors in a process coupled in part to vesicle exocytosis. This is Sodium-dependent neutral amino acid transporter SLC6A17 from Homo sapiens (Human).